Reading from the N-terminus, the 202-residue chain is N-(5'-phosphoribosyl)anthranilate isomerase (202 aa).

Belongs to the TrpF family.

It carries out the reaction N-(5-phospho-beta-D-ribosyl)anthranilate = 1-(2-carboxyphenylamino)-1-deoxy-D-ribulose 5-phosphate. Its pathway is amino-acid biosynthesis; L-tryptophan biosynthesis; L-tryptophan from chorismate: step 3/5. This is N-(5'-phosphoribosyl)anthranilate isomerase from Listeria monocytogenes serovar 1/2a (strain ATCC BAA-679 / EGD-e).